Reading from the N-terminus, the 1058-residue chain is Carbamoyl phosphate synthase large chain (1058 aa).

The interval 1–401 is carboxyphosphate synthetic domain; the sequence is MPKRKDIQKI…SLLKACRSLE (401 aa). The ATP site is built by arginine 129, arginine 169, glycine 175, glycine 176, arginine 208, isoleucine 210, glutamate 215, glycine 241, isoleucine 242, histidine 243, glutamine 284, and glutamate 298. In terms of domain architecture, ATP-grasp 1 spans 133 to 327; that stretch reads KQLMQELDQP…IAKLAAKIAV (195 aa). Mg(2+)-binding residues include glutamine 284, glutamate 298, and asparagine 300. Mn(2+) contacts are provided by glutamine 284, glutamate 298, and asparagine 300. Residues 402–546 form an oligomerization domain region; the sequence is IGVCHNEMTS…YSTYELENES (145 aa). A carbamoyl phosphate synthetic domain region spans residues 547–929; that stretch reads VQSNKESILV…ALYKAFEANN (383 aa). The region spanning 671 to 861 is the ATP-grasp 2 domain; that stretch reads EKALKELGIP…MAQIATKLIL (191 aa). Positions 707, 746, 748, 752, 777, 778, 779, 780, 820, and 832 each coordinate ATP. Residues glutamine 820, glutamate 832, and asparagine 834 each coordinate Mg(2+). Mn(2+)-binding residues include glutamine 820, glutamate 832, and asparagine 834. Residues 930–1058 enclose the MGS-like domain; it reads SHLSEFGQIV…ESRCFNIEAI (129 aa). Residues 930–1058 form an allosteric domain region; the sequence is SHLSEFGQIV…ESRCFNIEAI (129 aa).

This sequence belongs to the CarB family. Composed of two chains; the small (or glutamine) chain promotes the hydrolysis of glutamine to ammonia, which is used by the large (or ammonia) chain to synthesize carbamoyl phosphate. Tetramer of heterodimers (alpha,beta)4. Mg(2+) serves as cofactor. Requires Mn(2+) as cofactor.

The enzyme catalyses hydrogencarbonate + L-glutamine + 2 ATP + H2O = carbamoyl phosphate + L-glutamate + 2 ADP + phosphate + 2 H(+). The catalysed reaction is hydrogencarbonate + NH4(+) + 2 ATP = carbamoyl phosphate + 2 ADP + phosphate + 2 H(+). It participates in amino-acid biosynthesis; L-arginine biosynthesis; carbamoyl phosphate from bicarbonate: step 1/1. Its pathway is pyrimidine metabolism; UMP biosynthesis via de novo pathway; (S)-dihydroorotate from bicarbonate: step 1/3. Functionally, large subunit of the glutamine-dependent carbamoyl phosphate synthetase (CPSase). CPSase catalyzes the formation of carbamoyl phosphate from the ammonia moiety of glutamine, carbonate, and phosphate donated by ATP, constituting the first step of 2 biosynthetic pathways, one leading to arginine and/or urea and the other to pyrimidine nucleotides. The large subunit (synthetase) binds the substrates ammonia (free or transferred from glutamine from the small subunit), hydrogencarbonate and ATP and carries out an ATP-coupled ligase reaction, activating hydrogencarbonate by forming carboxy phosphate which reacts with ammonia to form carbamoyl phosphate. The protein is Carbamoyl phosphate synthase large chain of Streptococcus pyogenes serotype M3 (strain ATCC BAA-595 / MGAS315).